Reading from the N-terminus, the 120-residue chain is Large ribosomal subunit protein bL20 (120 aa).

It belongs to the bacterial ribosomal protein bL20 family.

Its function is as follows. Binds directly to 23S ribosomal RNA and is necessary for the in vitro assembly process of the 50S ribosomal subunit. It is not involved in the protein synthesizing functions of that subunit. The polypeptide is Large ribosomal subunit protein bL20 (Ureaplasma parvum serovar 3 (strain ATCC 27815 / 27 / NCTC 11736)).